A 347-amino-acid chain; its full sequence is Heat-inducible transcription repressor HrcA (347 aa).

This sequence belongs to the HrcA family.

Negative regulator of class I heat shock genes (grpE-dnaK-dnaJ and groELS operons). Prevents heat-shock induction of these operons. The protein is Heat-inducible transcription repressor HrcA of Rhodococcus jostii (strain RHA1).